A 428-amino-acid chain; its full sequence is MPQIEELRRQRAGINEQIQALATIEATNGTLTAEQLTEFAGLQQQFTDISAKMDRMEATERAAALVAKPVKATQHGPAVIVKAEPKQYTGAGMTRMVMSIAAAQGNLQDAAKFASDELNDQSVSMAISTAAGSGGVLIPQNIHSEVIELLRDRTIVRKLGARSIPLPNGNMSLPRLAGGATASYTGENQDAKVSEARFDDVKLTAKTMIAMVPISNALIGRAGFNVEQLVLQDILTAISVREDKAFMRDDGTGDTPIGMKARATQWNRLLPWAADAAVNLDTIDTYLDSIILMSMDGNSNMISSGWGMSNRTYMKLFGLRDGNGNKVYPEMAQGMLKGYPIQRTSAIPANLGEGGKESEIYFADFNDVVIGEDGNMKVDFSKEASYIDTDGKLVSAFSRNQSLIRVVTEHDIGFRHPEGLVLGTGVLF.

Positions 4-24 (IEELRRQRAGINEQIQALATI) form a coiled coil.

This sequence belongs to the HK97 phage major capsid protein family. The scaffolding domain delta is cleaved by the viral protease and lost after assembly.

Its subcellular location is the virion. Functionally, major capsid protein that assembles to form an icosahedral capsid. This is Major capsid protein from Klebsiella oxytoca (Bacteriophage phiKO2).